The primary structure comprises 460 residues: Ribulose bisphosphate carboxylase (460 aa).

Residue N112 coordinates substrate. K167 (proton acceptor) is an active-site residue. Residue K169 participates in substrate binding. Positions 192, 194, and 195 each coordinate Mg(2+). The residue at position 192 (K192) is an N6-carboxylysine. H288 (proton acceptor) is an active-site residue. Substrate-binding residues include R289, H322, and S369.

It belongs to the RuBisCO large chain family. Type II subfamily. Homodimer. It depends on Mg(2+) as a cofactor.

The catalysed reaction is 2 (2R)-3-phosphoglycerate + 2 H(+) = D-ribulose 1,5-bisphosphate + CO2 + H2O. It catalyses the reaction D-ribulose 1,5-bisphosphate + O2 = 2-phosphoglycolate + (2R)-3-phosphoglycerate + 2 H(+). RuBisCO catalyzes two reactions: the carboxylation of D-ribulose 1,5-bisphosphate, the primary event in carbon dioxide fixation, as well as the oxidative fragmentation of the pentose substrate. Both reactions occur simultaneously and in competition at the same active site. This chain is Ribulose bisphosphate carboxylase, found in Rhodopseudomonas palustris (strain BisA53).